Here is a 236-residue protein sequence, read N- to C-terminus: Syntaxin-8 (236 aa).

At 1–215 the chain is on the cytoplasmic side; the sequence is MAPDPWFSTY…LVDRKSTSCG (215 aa). Positions 42–65 form a coiled coil; the sequence is LTIRTLLKNLKVKIDLLKDLLLRA. The region spanning 145–207 is the t-SNARE coiled-coil homology domain; that stretch reads QKIIQEQDAG…RTEARRVTLV (63 aa). At Ser160 the chain carries Phosphoserine. A helical; Anchor for type IV membrane protein transmembrane segment spans residues 216 to 232; sequence MIMVILLLLVAIVVVAV. The Vesicular segment spans residues 233-236; that stretch reads WPTN.

Belongs to the syntaxin family. Forms a SNARE complex with STX7, VTI1B and VAMP8 which functions in the homotypic fusion of late endosomes. Part of the SNARE core complex containing STX7, VAMP8 and VTI1B. Interacts with VAMP8. Interacts with HECTD3. Interacts with TPC1. Post-translationally, ubiquitinated by HECTD3.

The protein localises to the membrane. Its function is as follows. Vesicle trafficking protein that functions in the early secretory pathway, possibly by mediating retrograde transport from cis-Golgi membranes to the ER. The chain is Syntaxin-8 (Stx8) from Mus musculus (Mouse).